We begin with the raw amino-acid sequence, 601 residues long: Elongation factor 4 (601 aa).

A tr-type G domain is found at 6-188 (NRIRNFCIIA…QVVTKIAPPK (183 aa)). GTP-binding positions include 18–23 (DHGKST) and 135–138 (NKID).

This sequence belongs to the TRAFAC class translation factor GTPase superfamily. Classic translation factor GTPase family. LepA subfamily.

It is found in the cell membrane. It carries out the reaction GTP + H2O = GDP + phosphate + H(+). Functionally, required for accurate and efficient protein synthesis under certain stress conditions. May act as a fidelity factor of the translation reaction, by catalyzing a one-codon backward translocation of tRNAs on improperly translocated ribosomes. Back-translocation proceeds from a post-translocation (POST) complex to a pre-translocation (PRE) complex, thus giving elongation factor G a second chance to translocate the tRNAs correctly. Binds to ribosomes in a GTP-dependent manner. In Desulforamulus reducens (strain ATCC BAA-1160 / DSM 100696 / MI-1) (Desulfotomaculum reducens), this protein is Elongation factor 4.